Reading from the N-terminus, the 199-residue chain is Nucleoside triphosphate pyrophosphatase (199 aa).

The active-site Proton acceptor is the Asp-72.

The protein belongs to the Maf family. It depends on a divalent metal cation as a cofactor.

It localises to the cytoplasm. It carries out the reaction a ribonucleoside 5'-triphosphate + H2O = a ribonucleoside 5'-phosphate + diphosphate + H(+). The catalysed reaction is a 2'-deoxyribonucleoside 5'-triphosphate + H2O = a 2'-deoxyribonucleoside 5'-phosphate + diphosphate + H(+). In terms of biological role, nucleoside triphosphate pyrophosphatase. May have a dual role in cell division arrest and in preventing the incorporation of modified nucleotides into cellular nucleic acids. This is Nucleoside triphosphate pyrophosphatase from Synechococcus elongatus (strain ATCC 33912 / PCC 7942 / FACHB-805) (Anacystis nidulans R2).